A 35-amino-acid polypeptide reads, in one-letter code: Natriuretic peptide TNPa (35 aa).

A disulfide bridge links Cys9 with Cys25.

As to expression, expressed by the venom gland.

The protein localises to the secreted. Snake venom natriuretic peptide that exhibits vasoactive and probable hypotensive activity. Is only weakly active on natriuretic peptide receptor-C (NPR3). Stimulates cGMP production through the natriuretic peptide receptor 1 (NPR1) with moderate potencies for the rat NPR1 (EC(50)=2020 nM), and very weak potencies over human NPR1 (15% activation at 10 uM). In vivo, does not impact systolic and diastolic blood pressure, as well as heart rate, when intravenously injected in conscious rabbits. Does not affect the bradycardia due to cardiac afferent stimulation (Bezold-Jarisch reflex). This chain is Natriuretic peptide TNPa, found in Oxyuranus microlepidotus (Inland taipan).